We begin with the raw amino-acid sequence, 633 residues long: Extracellular metalloproteinase mep (633 aa).

An N-terminal signal peptide occupies residues 1-18; the sequence is MRLLSLAGAMALPLCVLA. A propeptide spanning residues 19–244 is cleaved from the precursor; the sequence is HPTHRTRGIA…IHGVVDYISD (226 aa). An N-linked (GlcNAc...) asparagine glycan is attached at Asn326. His428 contributes to the Zn(2+) binding site. Residue Glu429 is part of the active site. Position 432 (His432) interacts with Zn(2+). Asn514 carries N-linked (GlcNAc...) asparagine glycosylation.

Belongs to the peptidase M36 family. Requires Zn(2+) as cofactor.

The protein localises to the secreted. Its function is as follows. Secreted metalloproteinase that allows assimilation of proteinaceous substrates. The polypeptide is Extracellular metalloproteinase mep (mep) (Aspergillus terreus (strain NIH 2624 / FGSC A1156)).